The following is a 196-amino-acid chain: MTEIISTTILLVLIMDPLGNLPIFMTILKHLDVKRRRIVVIREMIIALIVMLLFLFVGEKILIILNLKTETVSISGGVILFLIAIKMIFPSEDNNNEISSSEEPFLVPLAIPLVAGPSLLATLMLLSHQYLHHMFYLVGSLLISWFFTVIILLSSSLFLKLFGSKGVNALERLMGLVLIMLSTQMFLDGIRAWFKN.

Transmembrane regions (helical) follow at residues Thr-8–Leu-28, Ile-45–Leu-65, Thr-71–Ser-91, Phe-105–Leu-125, Met-134–Ser-154, and Met-174–Phe-194.

It belongs to the UPF0056 (MarC) family.

It is found in the cell membrane. The protein is UPF0056 membrane protein BU449 of Buchnera aphidicola subsp. Acyrthosiphon pisum (strain APS) (Acyrthosiphon pisum symbiotic bacterium).